A 264-amino-acid polypeptide reads, in one-letter code: Small ribosomal subunit protein eS1 (264 aa).

Lysine 34 bears the N6-acetyllysine; alternate mark. Residue lysine 34 forms a Glycyl lysine isopeptide (Lys-Gly) (interchain with G-Cter in SUMO2); alternate linkage. Position 56 is an N6-acetyllysine (lysine 56). Tyrosine 155 carries the post-translational modification ADP-ribosyltyrosine. The segment at 232–264 is disordered; sequence HGEGSSSGKATGDETGAKVERADGYEPPVQESV. Serine 236 and serine 237 each carry phosphoserine. The span at 242–255 shows a compositional bias: basic and acidic residues; the sequence is TGDETGAKVERADG. Lysine 249 is subject to N6-acetyllysine; alternate. Residue lysine 249 forms a Glycyl lysine isopeptide (Lys-Gly) (interchain with G-Cter in SUMO2); alternate linkage. Tyrosine 256 bears the Phosphotyrosine mark. Position 263 is a phosphoserine (serine 263).

Belongs to the eukaryotic ribosomal protein eS1 family. Component of the small ribosomal subunit. Mature ribosomes consist of a small (40S) and a large (60S) subunit. The 40S subunit contains about 33 different proteins and 1 molecule of RNA (18S). The 60S subunit contains about 49 different proteins and 3 molecules of RNA (28S, 5.8S and 5S). Identified in a IGF2BP1-dependent mRNP granule complex containing untranslated mRNAs. Binds with high affinity to IPO4. Interacts with DDIT3. Part of the small subunit (SSU) processome, composed of more than 70 proteins and the RNA chaperone small nucleolar RNA (snoRNA) U3. In terms of processing, ADP-ribosylated at Tyr-155 by PARP1 in presence of HPF1.

It is found in the cytoplasm. It localises to the nucleus. The protein resides in the nucleolus. Functionally, component of the small ribosomal subunit. The ribosome is a large ribonucleoprotein complex responsible for the synthesis of proteins in the cell. Part of the small subunit (SSU) processome, first precursor of the small eukaryotic ribosomal subunit. During the assembly of the SSU processome in the nucleolus, many ribosome biogenesis factors, an RNA chaperone and ribosomal proteins associate with the nascent pre-rRNA and work in concert to generate RNA folding, modifications, rearrangements and cleavage as well as targeted degradation of pre-ribosomal RNA by the RNA exosome. May play a role during erythropoiesis through regulation of transcription factor DDIT3. This Bos taurus (Bovine) protein is Small ribosomal subunit protein eS1.